We begin with the raw amino-acid sequence, 54 residues long: Potassium channel toxin alpha-KTx 14.2 (54 aa).

Positions 1-23 (MKIFFAILLILAVCSMAIWTVNG) are cleaved as a signal peptide. 3 cysteine pairs are disulfide-bonded: C30–C46, C36–C51, and C40–C53.

Belongs to the short scorpion toxin superfamily. Potassium channel inhibitor family. Alpha-KTx 14 subfamily. As to expression, expressed by the venom gland.

It localises to the secreted. Inhibits potassium channels. May be active towards small conductance calcium-activated potassium channels (KCNN, SK), and less active towards voltage-gated potassium channels (Kv/KCN). The polypeptide is Potassium channel toxin alpha-KTx 14.2 (Olivierus martensii (Manchurian scorpion)).